The primary structure comprises 402 residues: Nicotinate phosphoribosyltransferase (402 aa).

A Phosphohistidine; by autocatalysis modification is found at histidine 224.

Belongs to the NAPRTase family. Transiently phosphorylated on a His residue during the reaction cycle. Phosphorylation strongly increases the affinity for substrates and increases the rate of nicotinate D-ribonucleotide production. Dephosphorylation regenerates the low-affinity form of the enzyme, leading to product release.

The enzyme catalyses nicotinate + 5-phospho-alpha-D-ribose 1-diphosphate + ATP + H2O = nicotinate beta-D-ribonucleotide + ADP + phosphate + diphosphate. It participates in cofactor biosynthesis; NAD(+) biosynthesis; nicotinate D-ribonucleotide from nicotinate: step 1/1. Functionally, catalyzes the synthesis of beta-nicotinate D-ribonucleotide from nicotinate and 5-phospho-D-ribose 1-phosphate at the expense of ATP. This chain is Nicotinate phosphoribosyltransferase, found in Neisseria meningitidis serogroup B (strain ATCC BAA-335 / MC58).